The following is a 1235-amino-acid chain: Serine/threonine-protein kinase TAO2 (1235 aa).

Position 9 is a phosphoserine (S9). One can recognise a Protein kinase domain in the interval 28 to 281 (FSDLREIGHG…SEVLLKHRFV (254 aa)). ATP is bound by residues 34 to 42 (IGHGSFGAV) and K57. 106 to 108 (EYC) provides a ligand contact to staurosporine. D151 acts as the Proton acceptor in catalysis. A staurosporine-binding site is contributed by G155. Phosphoserine is present on S181. Positions 318 to 457 (QEAPNGPGAE…PTSTSSSSAR (140 aa)) are disordered. A compositionally biased stretch (low complexity) spans 350–374 (SSHSVPSMSISASSQSSSVNSLADA). Over residues 375–395 (SDNEEEEEEEEEEEEEEEEEG) the composition is skewed to acidic residues. Positions 396–411 (PESREMAMMQEGEHTV) are enriched in basic and acidic residues. Position 416 is a phosphoserine (S416). Coiled coils occupy residues 488 to 523 (SALREQLSGYKRMRRQHQKQLLALESRLRGEREEHS) and 576 to 603 (KELAALLEAQKRTYKLRKEQLKEELQEN). Residue S658 is modified to Phosphoserine. The stretch at 683-715 (LRQHEATRELELRQLQAVQRTRAELTRLQHQTE) forms a coiled coil. Residues S777, S825, and S827 each carry the phosphoserine modification. Residues 892–941 (GPVLTPVPEEEEEEEEEGGAPIGTPRDPGDGCPSPDIPPEPPPSHLRQYP) are disordered. Residues 899 to 909 (PEEEEEEEEEG) show a composition bias toward acidic residues. Residues 926-935 (PDIPPEPPPS) show a composition bias toward pro residues. 3 helical membrane-spanning segments follow: residues 967 to 987 (LLPLLLLLLLPLLAAQGGGGL), 989 to 1009 (AALLALEVGLVGLGASYLFLC), and 1014 to 1034 (LPPSLFLLLAQGTALGAVLSL). R1038 is modified (phosphoserine). The next 2 membrane-spanning stretches (helical) occupy residues 1040–1060 (LMGVPLGLGAAWLLAWPSLAL) and 1170–1190 (LASCLPPWAVHILASWGLLKG). Positions 1210–1235 (SASRQLPPGTVAGRRSQTRRALPPWR) are disordered.

This sequence belongs to the protein kinase superfamily. STE Ser/Thr protein kinase family. STE20 subfamily. Self-associates. Interacts with MAP2K3 and MAP2K6. Interacts with tubulins. Interacts with MAP3K7 and interferes with MAP3K7-binding to CHUK and thus prevents NF-kappa-B activation. Isoform 2 interacts with PCDH8; this complex may also include CDH2. The cofactor is Mg(2+). In terms of processing, autophosphorylated. Phosphorylated by ATM. Phosphorylated on Ser-1038 by MAPK14. This phosphorylation is required PCDH8 for endocytosis.

It localises to the cytoplasmic vesicle membrane. Its subcellular location is the cytoplasm. It is found in the cytoskeleton. The protein localises to the cell projection. The protein resides in the dendrite. It catalyses the reaction L-seryl-[protein] + ATP = O-phospho-L-seryl-[protein] + ADP + H(+). The catalysed reaction is L-threonyl-[protein] + ATP = O-phospho-L-threonyl-[protein] + ADP + H(+). Its activity is regulated as follows. Moderately inhibited by staurosporine, a broad-range protein kinase inhibitor. Serine/threonine-protein kinase involved in different processes such as membrane blebbing and apoptotic bodies formation DNA damage response and MAPK14/p38 MAPK stress-activated MAPK cascade. Phosphorylates itself, MBP, activated MAPK8, MAP2K3, MAP2K6 and tubulins. Activates the MAPK14/p38 MAPK signaling pathway through the specific activation and phosphorylation of the upstream MAP2K3 and MAP2K6 kinases. In response to DNA damage, involved in the G2/M transition DNA damage checkpoint by activating the p38/MAPK14 stress-activated MAPK cascade, probably by mediating phosphorylation of upstream MAP2K3 and MAP2K6 kinases. May affect microtubule organization and stability. May play a role in the osmotic stress-MAPK8 pathway. Prevents MAP3K7-mediated activation of CHUK, and thus NF-kappa-B activation. Isoform 2, but not isoform 1, is required for PCDH8 endocytosis. Following homophilic interactions between PCDH8 extracellular domains, isoform 2 phosphorylates and activates MAPK14/p38 MAPK which in turn phosphorylates isoform 2. This process leads to PCDH8 endocytosis and CDH2 cointernalization. Both isoforms are involved in MAPK14/p38 MAPK activation. In Rattus norvegicus (Rat), this protein is Serine/threonine-protein kinase TAO2 (Taok2).